The chain runs to 235 residues: MNSLSYLNQSIGFPPPEQALTDPNGLLAIGGDLRPDRLAQAYYQGIFPWFNANDPILWWSPDPRAVFTPSHPFGSKSLIKFLKKSAWRFTINQAFLDVVAGCAGPRNTQDGTWISAEIQMAYYELHLQGHAHSIEVWDGEQLVGGLYGIPVGGIFCGESMFHRQTNASKAAFAILNQHLVKHDFQLIDAQVMNPHLVSLGAKALPRSEFLTILHQYRDRATSASMWNKQEVFIEF.

This sequence belongs to the L/F-transferase family.

The protein localises to the cytoplasm. The enzyme catalyses N-terminal L-lysyl-[protein] + L-leucyl-tRNA(Leu) = N-terminal L-leucyl-L-lysyl-[protein] + tRNA(Leu) + H(+). It catalyses the reaction N-terminal L-arginyl-[protein] + L-leucyl-tRNA(Leu) = N-terminal L-leucyl-L-arginyl-[protein] + tRNA(Leu) + H(+). It carries out the reaction L-phenylalanyl-tRNA(Phe) + an N-terminal L-alpha-aminoacyl-[protein] = an N-terminal L-phenylalanyl-L-alpha-aminoacyl-[protein] + tRNA(Phe). Functions in the N-end rule pathway of protein degradation where it conjugates Leu, Phe and, less efficiently, Met from aminoacyl-tRNAs to the N-termini of proteins containing an N-terminal arginine or lysine. In Shewanella frigidimarina (strain NCIMB 400), this protein is Leucyl/phenylalanyl-tRNA--protein transferase.